The sequence spans 264 residues: Indole-3-glycerol phosphate synthase (264 aa).

This sequence belongs to the TrpC family.

It catalyses the reaction 1-(2-carboxyphenylamino)-1-deoxy-D-ribulose 5-phosphate + H(+) = (1S,2R)-1-C-(indol-3-yl)glycerol 3-phosphate + CO2 + H2O. Its pathway is amino-acid biosynthesis; L-tryptophan biosynthesis; L-tryptophan from chorismate: step 4/5. The polypeptide is Indole-3-glycerol phosphate synthase (Stenotrophomonas maltophilia (strain K279a)).